Here is a 341-residue protein sequence, read N- to C-terminus: Tetraacyldisaccharide 4'-kinase (341 aa).

An ATP-binding site is contributed by 54 to 61 (TVGGAGKT).

Belongs to the LpxK family.

It catalyses the reaction a lipid A disaccharide + ATP = a lipid IVA + ADP + H(+). It participates in glycolipid biosynthesis; lipid IV(A) biosynthesis; lipid IV(A) from (3R)-3-hydroxytetradecanoyl-[acyl-carrier-protein] and UDP-N-acetyl-alpha-D-glucosamine: step 6/6. Its function is as follows. Transfers the gamma-phosphate of ATP to the 4'-position of a tetraacyldisaccharide 1-phosphate intermediate (termed DS-1-P) to form tetraacyldisaccharide 1,4'-bis-phosphate (lipid IVA). The sequence is that of Tetraacyldisaccharide 4'-kinase from Brucella suis (strain ATCC 23445 / NCTC 10510).